The following is a 467-amino-acid chain: ATP synthase subunit beta (467 aa).

154–161 (GGAGVGKT) lines the ATP pocket.

Belongs to the ATPase alpha/beta chains family. As to quaternary structure, F-type ATPases have 2 components, CF(1) - the catalytic core - and CF(0) - the membrane proton channel. CF(1) has five subunits: alpha(3), beta(3), gamma(1), delta(1), epsilon(1). CF(0) has three main subunits: a(1), b(2) and c(9-12). The alpha and beta chains form an alternating ring which encloses part of the gamma chain. CF(1) is attached to CF(0) by a central stalk formed by the gamma and epsilon chains, while a peripheral stalk is formed by the delta and b chains.

Its subcellular location is the cell inner membrane. The catalysed reaction is ATP + H2O + 4 H(+)(in) = ADP + phosphate + 5 H(+)(out). Its function is as follows. Produces ATP from ADP in the presence of a proton gradient across the membrane. The catalytic sites are hosted primarily by the beta subunits. The protein is ATP synthase subunit beta of Leptospira interrogans serogroup Icterohaemorrhagiae serovar copenhageni (strain Fiocruz L1-130).